We begin with the raw amino-acid sequence, 95 residues long: Ragulator complex protein LAMTOR4 homolog (95 aa).

The protein belongs to the LAMTOR4 family. Part of the Ragulator complex.

Its subcellular location is the lysosome. Regulator of the TOR pathway, a signaling cascade that promotes cell growth in response to growth factors, energy levels, and amino acids. As part of the Ragulator complex, may activate the TOR signaling cascade in response to amino acids. The chain is Ragulator complex protein LAMTOR4 homolog from Nematostella vectensis (Starlet sea anemone).